The following is a 305-amino-acid chain: Thyroxine 5-deiodinase (305 aa).

The Cytoplasmic segment spans residues 1–43; that stretch reads MPGQAGRRRLVGGGCRGSQGPLGGAATMLRSLLLHSLRLCAQT. A helical; Signal-anchor for type II membrane protein membrane pass occupies residues 44–63; it reads ASCLVLFPRFLGTACMLWLL. Residues 64-305 are Extracellular-facing; that stretch reads DFLCIRKHLL…QLHGPQPRRV (242 aa). Positions 79-98 are disordered; it reads GEPETEVELNSDGDEVPPDD. The span at 82–96 shows a compositional bias: acidic residues; the sequence is ETEVELNSDGDEVPP. Residue Sec171 is part of the active site. Residue Sec171 is a non-standard amino acid, selenocysteine.

The protein belongs to the iodothyronine deiodinase family. As to quaternary structure, monomer. Homodimer. May undergo minor heretodimerization with DIO1 and DIO2. Expressed in brain only.

The protein localises to the cell membrane. It localises to the endosome membrane. It catalyses the reaction 3,3',5'-triiodo-L-thyronine + iodide + A + H(+) = L-thyroxine + AH2. It carries out the reaction 3,3'-diiodo-L-thyronine + iodide + A + H(+) = 3,3',5-triiodo-L-thyronine + AH2. The enzyme catalyses 3-iodo-L-thyronine + iodide + A + H(+) = 3,5-diiodo-L-thyronine + AH2. The catalysed reaction is L-thyronine + iodide + A + H(+) = 3-iodo-L-thyronine + AH2. It catalyses the reaction 3',5'-diiodo-L-thyronine + iodide + A + H(+) = 3,3',5'-triiodo-L-thyronine + AH2. It carries out the reaction 3'-iodo-L-thyronine + iodide + A + H(+) = 3,3'-diiodo-L-thyronine + AH2. The enzyme catalyses 3,3',5'-triiodothyronamine + iodide + A + H(+) = 3,3',5,5'-tetraiodothyronamine + AH2. The catalysed reaction is 3',5'-diiodothyronamine + iodide + A + H(+) = 3,3',5'-triiodothyronamine + AH2. It catalyses the reaction 3,3'-diiodothyronamine + iodide + A + H(+) = 3,3',5-triiodothyronamine + AH2. It carries out the reaction 3-iodothyronamine + iodide + A + H(+) = 3,5-diiodothyronamine + AH2. The enzyme catalyses 3'-iodothyronamine + iodide + A + H(+) = 3,3'-diiodothyronamine + AH2. The catalysed reaction is thyronamine + iodide + A + H(+) = 3-iodothyronamine + AH2. Plays a crucial role in the metabolism of thyroid hormones (TH) and has specific roles in TH activation and inactivation by deiodination, particularly in different tissues. Catalyzes the deiodination of L-thyroxine (T4) to 3,3',5'-triiodothyronine (rT3), 3,5-diiodothyronine (3,5-T2) to 3-monoiodothyronine (3-T1), rT3 to 3',5'-diiodothyronine (3',5'-T2) and 3,3'-diiodothyronine (3,3'-T2) to 3'-monoiodothyronine (3'-T1) via inner-ring deiodination (IRD). Catalyzes the deiodination of 3,5,3'-triiodothyronine (T3) to 3,3'-diiodothyronine (3,3'-T2) via IRD. Catalyzes the deiodination of 3-T1 to L-thyronine (T0) via outer-ring deiodination (ORD). Catalyzes the tyrosyl ring deiodinations of 3,3',5,5'-tetraiodothyronamine, 3,3',5'-triiodothyronamine, 3,5,3'-triiodothyronamine, 3,5-diiodothyronamine, 3,3'-diiodothyronamine and 3-iodothyronamine. This Sus scrofa (Pig) protein is Thyroxine 5-deiodinase (DIO3).